The chain runs to 276 residues: Diaminopimelate epimerase (276 aa).

3 residues coordinate substrate: asparagine 13, glutamine 46, and asparagine 66. The active-site Proton donor is the cysteine 75. Residues 76–77, asparagine 159, asparagine 192, and 210–211 contribute to the substrate site; these read GN and ER. Cysteine 219 functions as the Proton acceptor in the catalytic mechanism. 220–221 lines the substrate pocket; sequence GT.

Belongs to the diaminopimelate epimerase family. Homodimer.

The protein localises to the cytoplasm. The enzyme catalyses (2S,6S)-2,6-diaminopimelate = meso-2,6-diaminopimelate. It participates in amino-acid biosynthesis; L-lysine biosynthesis via DAP pathway; DL-2,6-diaminopimelate from LL-2,6-diaminopimelate: step 1/1. Functionally, catalyzes the stereoinversion of LL-2,6-diaminopimelate (L,L-DAP) to meso-diaminopimelate (meso-DAP), a precursor of L-lysine and an essential component of the bacterial peptidoglycan. This is Diaminopimelate epimerase from Pseudomonas fluorescens (strain Pf0-1).